Reading from the N-terminus, the 358-residue chain is tRNA-specific 2-thiouridylase MnmA (358 aa).

ATP is bound by residues 6 to 13 and leucine 32; that span reads AMSGGVDS. Cysteine 101 serves as the catalytic Nucleophile. Cysteine 101 and cysteine 193 form a disulfide bridge. Position 125 (glycine 125) interacts with ATP. The interval 143–145 is interaction with tRNA; that stretch reads KDQ. Cysteine 193 serves as the catalytic Cysteine persulfide intermediate.

The protein belongs to the MnmA/TRMU family.

Its subcellular location is the cytoplasm. The enzyme catalyses S-sulfanyl-L-cysteinyl-[protein] + uridine(34) in tRNA + AH2 + ATP = 2-thiouridine(34) in tRNA + L-cysteinyl-[protein] + A + AMP + diphosphate + H(+). In terms of biological role, catalyzes the 2-thiolation of uridine at the wobble position (U34) of tRNA, leading to the formation of s(2)U34. The sequence is that of tRNA-specific 2-thiouridylase MnmA from Mycolicibacterium paratuberculosis (strain ATCC BAA-968 / K-10) (Mycobacterium paratuberculosis).